We begin with the raw amino-acid sequence, 584 residues long: Pescadillo homolog (584 aa).

The tract at residues 1–54 is required for 28S ribosomal RNA processing; that stretch reads MGGLEKKKYERGSATNYITRNKARKKLQLSLPDFRRLCILKGIYPHEPKHKKKV. The interval 1 to 257 is sufficient for nucleolar localization; it reads MGGLEKKKYE…PKLEGQAQAE (257 aa). Lysine 98 bears the N6-acetyllysine mark. The segment at 312-414 is sufficient for interaction with MAP1B; it reads RKKELEAQEK…LLLPVAEYFP (103 aa). The BRCT domain occupies 321 to 414; it reads KHKKLFEGLK…LLLPVAEYFP (94 aa). A disordered region spans residues 449–510; sequence DPGHLEEEEE…EEKKPQVMAG (62 aa). Residues 454 to 489 are compositionally biased toward acidic residues; sequence EEEEEEDEDDDNEGDVAAENEEEDVEVESEEEEEEE. Positions 496-505 are enriched in basic and acidic residues; the sequence is EQHRLEEKKP. Lysine 513 participates in a covalent cross-link: Glycyl lysine isopeptide (Lys-Gly) (interchain with G-Cter in SUMO1); alternate. Lysine 513 is covalently cross-linked (Glycyl lysine isopeptide (Lys-Gly) (interchain with G-Cter in SUMO2); alternate). The tract at residues 535 to 584 is required for 28S ribosomal RNA processing; the sequence is MMKKREKYLYQKIMFGKRRKIREANKLAEKRKAHDDAVRSEKKAKRTRPV. Residues 560–575 show a composition bias toward basic and acidic residues; sequence KLAEKRKAHDDAVRSE. The interval 560 to 584 is disordered; the sequence is KLAEKRKAHDDAVRSEKKAKRTRPV.

It belongs to the pescadillo family. Component of the PeBoW complex, composed of BOP1, PES1 and WDR12. The complex is held together by BOP1, which interacts with PES1 via its N-terminal domain and with WDR12 via a high-affinity interaction between the seven-bladed beta-propeller domains of the 2 proteins. The PeBoW complex associates with the 66S pre-ribosome. The PeBoW complex also associates with DDX27, PES1 interacts directly with DDX27. Interacts with IRS1 and UBTF. May interact with MAP1B. Post-translationally, sumoylated. In terms of tissue distribution, ubiquitous. Highest levels appear to be found in tissues that contain a population of proliferating cells, such as ovary and testis. Also appears to be highly expressed in kidney and liver. In the brain expression is restricted to neural progenitor cells and postmitotic neurons. Highly expressed in malignant astrocytes.

Its subcellular location is the nucleus. It is found in the nucleolus. The protein localises to the nucleoplasm. It localises to the chromosome. Functionally, component of the PeBoW complex, which is required for maturation of 28S and 5.8S ribosomal RNAs and formation of the 60S ribosome. This chain is Pescadillo homolog (Pes1), found in Mus musculus (Mouse).